The sequence spans 197 residues: Xanthine phosphoribosyltransferase (197 aa).

Xanthine-binding residues include Leu20 and Asn27. Position 128-132 (128-132 (ANGQA)) interacts with 5-phospho-alpha-D-ribose 1-diphosphate. Xanthine is bound at residue Lys156.

The protein belongs to the purine/pyrimidine phosphoribosyltransferase family. Xpt subfamily. Homodimer.

It is found in the cytoplasm. It catalyses the reaction XMP + diphosphate = xanthine + 5-phospho-alpha-D-ribose 1-diphosphate. It participates in purine metabolism; XMP biosynthesis via salvage pathway; XMP from xanthine: step 1/1. Its function is as follows. Converts the preformed base xanthine, a product of nucleic acid breakdown, to xanthosine 5'-monophosphate (XMP), so it can be reused for RNA or DNA synthesis. The polypeptide is Xanthine phosphoribosyltransferase (Bacillus cereus (strain B4264)).